A 388-amino-acid chain; its full sequence is MSTVFNTNPVDVLNEPMFFGSGLGLARYDIQRHRVFEELIERQISFFWRPEEVNLMMDAAQFNKLPQYQQNIFTNNLKYQSLLDSIQGRAPSAVLMSLISDPSLDTWVATWTFSETIHSRSYTHIMRNLYTDPSKVFDEIVLDEAIMKRAESIGRYYDDVLVKTREWENAKDMVEYYKDQGLILADKDVEQRAKRDLMKSLYLCLHVINALEAIRFYVSFACTFNFHKNMEIMEGNAKIMKFIARDEQLHLKGTQYIIRQLQSGTDGDEWVKIAQECEQEAVDIFMEVNRQEKDWAVHLFKDGDVPGLNTNSMWSFIDYLTVSRMKQCGLPCPITDAPVKHPYPWIREYLNSDNVQSAPQEVELSSYLVAQIDNDVDDKVMMSFKKYF.

3 residues coordinate Fe cation: Asp84, Glu115, and His118. The active site involves Tyr122. Residues Glu212, Glu247, and His250 each contribute to the Fe cation site.

It belongs to the ribonucleoside diphosphate reductase small chain family. Heterodimer of a large and a small subunit. Fe cation serves as cofactor.

The catalysed reaction is a 2'-deoxyribonucleoside 5'-diphosphate + [thioredoxin]-disulfide + H2O = a ribonucleoside 5'-diphosphate + [thioredoxin]-dithiol. Its function is as follows. Provides the precursors necessary for DNA synthesis. Catalyzes the biosynthesis of deoxyribonucleotides from the corresponding ribonucleotides. This is Ribonucleoside-diphosphate reductase subunit beta (NRDB) from Escherichia coli (Bacteriophage T4).